A 278-amino-acid chain; its full sequence is S-methyl-5'-thioadenosine phosphorylase (278 aa).

Phosphate contacts are provided by residues S13, 55-56 (RH), and 88-89 (TA). Residue M190 participates in substrate binding. Phosphate is bound at residue T191. 214–216 (DYD) contributes to the substrate binding site.

It belongs to the PNP/MTAP phosphorylase family. MTAP subfamily. As to quaternary structure, homotrimer.

It is found in the cytoplasm. The protein localises to the nucleus. The catalysed reaction is S-methyl-5'-thioadenosine + phosphate = 5-(methylsulfanyl)-alpha-D-ribose 1-phosphate + adenine. It functions in the pathway amino-acid biosynthesis; L-methionine biosynthesis via salvage pathway; S-methyl-5-thio-alpha-D-ribose 1-phosphate from S-methyl-5'-thioadenosine (phosphorylase route): step 1/1. In terms of biological role, catalyzes the reversible phosphorylation of S-methyl-5'-thioadenosine (MTA) to adenine and 5-methylthioribose-1-phosphate. Involved in the breakdown of MTA, a major by-product of polyamine biosynthesis. Responsible for the first step in the methionine salvage pathway after MTA has been generated from S-adenosylmethionine. Has broad substrate specificity with 6-aminopurine nucleosides as preferred substrates. The polypeptide is S-methyl-5'-thioadenosine phosphorylase (Anopheles gambiae (African malaria mosquito)).